The following is a 177-amino-acid chain: Mitochondrial inner membrane protease subunit 2 (177 aa).

A helical transmembrane segment spans residues 19-37; the sequence is FFVAVPVAVTFLDRVACVA. Active-site residues include Ser43 and Lys91.

Belongs to the peptidase S26 family. IMP2 subfamily. Heterodimer of 2 subunits, IMMPL1 and IMMPL2.

It is found in the mitochondrion inner membrane. In terms of biological role, catalyzes the removal of transit peptides required for the targeting of proteins from the mitochondrial matrix, across the inner membrane, into the inter-membrane space. Known to process the nuclear encoded protein DIABLO. This Bos taurus (Bovine) protein is Mitochondrial inner membrane protease subunit 2 (IMMP2L).